Here is a 588-residue protein sequence, read N- to C-terminus: MSSSYWSETSSSSCGTQLPEVLQCQPQHYHCYHQSSQAQQPPEKNVVYERVRTYSGPMNKVVQALDPFNSREVLSPLKTTSSYQNLVWSDHSQELHSPTLKISTCAPSTLHITQNTEQELHSPTVKVTTYPQTTIRKYVVQNPEQEPLSQFLRGSQFFPGNNVIYEKTIRKVEKLNTDQGCHPQAQCHHHIVQQPQVIRSAHWQQPDSSQQIQAITGNDPISTHIGNELCHSGSSQIHEQVIIQDDGPEKLDPRYFGELLADLSRKNTDLYHCLLEHLQRIGGSKQDFESTDESEDIKSLIPKGLSEFTKQQIRYILQMRGMSDKSLRLVLSTFSNIREELGHLQNDLTSLENDKMRLEKDLSFKETQLKEYEELLASVRANNHQQQQGLQDSSSKCQALEENNLSLRHTLSDMEYRLKELEYCKRNLEQENQNLRMQVSETCTGPMLQAKMDEIGNHYTEMVKNLRMEEDREICRLRSQLNQYHKDVSKREGSCSDFQFKLHELTSLLEEKDSLIKRQSEELSKLRQEIYSSHNQPSTGGRTTITTKKYRTQYPILGLLYDDYEYIPPGSETQTIVIEKTEDKYTCP.

Coiled coils occupy residues 332–442 (STFS…VSET) and 502–530 (LHEL…RQEI).

In terms of assembly, interacts with nonmuscle actin.

The protein resides in the cell junction. It localises to the tight junction. In terms of biological role, plays a key role in the organization of epithelial monolayers by regulating the actin cytoskeleton. May be involved in ovary development. The sequence is that of Protein POF1B (POF1B) from Pongo abelii (Sumatran orangutan).